Here is a 143-residue protein sequence, read N- to C-terminus: Nucleoside diphosphate kinase (143 aa).

ATP contacts are provided by Lys11, Phe59, Arg87, Thr93, Arg104, and Asn114. The active-site Pros-phosphohistidine intermediate is His117.

This sequence belongs to the NDK family. In terms of assembly, homotetramer. Mg(2+) is required as a cofactor.

Its subcellular location is the cytoplasm. It catalyses the reaction a 2'-deoxyribonucleoside 5'-diphosphate + ATP = a 2'-deoxyribonucleoside 5'-triphosphate + ADP. The enzyme catalyses a ribonucleoside 5'-diphosphate + ATP = a ribonucleoside 5'-triphosphate + ADP. In terms of biological role, major role in the synthesis of nucleoside triphosphates other than ATP. The ATP gamma phosphate is transferred to the NDP beta phosphate via a ping-pong mechanism, using a phosphorylated active-site intermediate. The protein is Nucleoside diphosphate kinase of Shewanella piezotolerans (strain WP3 / JCM 13877).